The sequence spans 842 residues: MVNFTVDQMRSLMDKVTNVRNMSVIAHVDHGKSTLTDSLVQRAGIISAAKAGEARFTDTRKDEQERGITIKSTAISLYSEMGDDDVKEIKQKTEGNSFLINLIDSPGHVDFSSEVTAALRVTDGALVVVDCVEGVCVQTETVLRQALGERIKPVVVINKVDRALLELQVTKEDLYQSFARTVESVNVVIATYTDKTIGDNQVYPEQGTVAFGSGLHGWAFTVRQFATRYSKKFGVDRIKMMERLWGDSYFNPKTKKWTNKDKDAAGKPLERAFNMFVLDPIFRLFAAIMNFKKDEIPVLLEKLEINLKREEKELEGKALLKVVMRKFLPAADALLEMIVLHLPSPVTAQAYRAETLYEGPSDDQFCIGIRECDPKAELMVYISKMVPTSDKGRFYAFGRVFSGTVKSGQKVRIQGPNYVPGKKEDLFIKAVQRTVLMMGRTVEPIDDVPAGNILGIVGIDQFLLKSGTLTTNEAAHNMKVMKFSVSPVVQVAVEVKNANDLPKLVEGLKRLSKSDPCVLTYISESGEHIVAGTGELHLEICLQDLQDDHAGVPLKISPPVVTYRETVTNESSMTALSKSQNKHNRIYLKAQPIDEELSLAIEEGKVHPRDDFKARARIMADEYGWDVTDARKIWCFGPDGTGANLVVDQSKAVQYLHEIKDSVVAGFQLATKEGPILGENMRSVRVNILDVTLHADAIHRGGGQVIPTMKRVTYAAFLLAEPAIQEPIFLVEIQCPENAIGGIYSVLNKKRGQVISEEQRPGTPLFTVKAYLPVNESFGFTGELRQATAGQAFPQMVFDHWANMNGNPLDPASKVGEIVLAARKRQGMKENVPGYEEYYDKL.

The tr-type G domain maps to threonine 17–lysine 253. GTP is bound by residues alanine 26–serine 33, asparagine 158–aspartate 161, and serine 213–leucine 215. Histidine 699 bears the Diphthamide mark.

This sequence belongs to the TRAFAC class translation factor GTPase superfamily. Classic translation factor GTPase family. EF-G/EF-2 subfamily.

It is found in the cytoplasm. It carries out the reaction GTP + H2O = GDP + phosphate + H(+). Its function is as follows. Catalyzes the GTP-dependent ribosomal translocation step during translation elongation. During this step, the ribosome changes from the pre-translocational (PRE) to the post-translocational (POST) state as the newly formed A-site-bound peptidyl-tRNA and P-site-bound deacylated tRNA move to the P and E sites, respectively. Catalyzes the coordinated movement of the two tRNA molecules, the mRNA and conformational changes in the ribosome. The sequence is that of Elongation factor 2 (EFT1) from Komagataella pastoris (Yeast).